Here is a 127-residue protein sequence, read N- to C-terminus: Large ribosomal subunit protein bL17 (127 aa).

The protein belongs to the bacterial ribosomal protein bL17 family. In terms of assembly, part of the 50S ribosomal subunit. Contacts protein L32.

This chain is Large ribosomal subunit protein bL17, found in Legionella pneumophila (strain Corby).